A 471-amino-acid chain; its full sequence is Glutamate--tRNA ligase (471 aa).

The short motif at 9 to 19 (PSPTGYLHVGG) is the 'HIGH' region element. The Zn(2+) site is built by Cys98, Cys100, Cys125, and His127. The short motif at 237-241 (KLSKR) is the 'KMSKS' region element. Lys240 contacts ATP.

This sequence belongs to the class-I aminoacyl-tRNA synthetase family. Glutamate--tRNA ligase type 1 subfamily. Monomer. Zn(2+) is required as a cofactor.

It is found in the cytoplasm. The catalysed reaction is tRNA(Glu) + L-glutamate + ATP = L-glutamyl-tRNA(Glu) + AMP + diphosphate. Its function is as follows. Catalyzes the attachment of glutamate to tRNA(Glu) in a two-step reaction: glutamate is first activated by ATP to form Glu-AMP and then transferred to the acceptor end of tRNA(Glu). This chain is Glutamate--tRNA ligase, found in Escherichia coli O6:K15:H31 (strain 536 / UPEC).